Here is a 446-residue protein sequence, read N- to C-terminus: Oxysterols receptor LXR-beta (446 aa).

Positions 1–28 (MSSPTSSLDTPLPGNGSPQPSTSSTSPT) are enriched in low complexity. Residues 1 to 69 (MSSPTSSLDT…PERKRKKGPA (69 aa)) form a disordered region. The segment at 1 to 76 (MSSPTSSLDT…GPAPKMLGHE (76 aa)) is transactivation AF-1; required for ligand-independent transactivation function. A DNA-binding region (nuclear receptor) is located at residues 75 to 152 (HELCRVCGDK…AGMREQCVLS (78 aa)). 2 consecutive NR C4-type zinc fingers follow at residues 78-98 (CRVC…CEGC) and 116-140 (CRGS…LRKC). Residues 160 to 201 (KIQKQQQQQPPPPTEPASGSSARPAASPGTSEASSQGSGEGE) are disordered. Residues 175 to 196 (PASGSSARPAASPGTSEASSQG) show a composition bias toward low complexity. The tract at residues 205–446 (LTAAQELMIQ…LLSEIWDVHE (242 aa)) is transactivation AF-2; required for ligand-dependent transactivation function; mediates interaction with CCAR2. The region spanning 208–446 (AQELMIQQLV…LLSEIWDVHE (239 aa)) is the NR LBD domain. Residues Lys395 and Lys433 each participate in a glycyl lysine isopeptide (Lys-Gly) (interchain with G-Cter in SUMO2) cross-link.

Belongs to the nuclear hormone receptor family. NR1 subfamily. Forms a heterodimer with RXR. Interacts with CCAR2 (via N-terminus) in a ligand-independent manner. Interacts (when sumoylated) with GPS2; interaction with GPS2 onto hepatic acute phase protein promoters prevents N-Cor corepressor complex dissociation. Interacts with ABCA12 and ABCA1; this interaction is required for ABCA1 localization to the cell surface and is necessary for its normal activity and stability. Post-translationally, sumoylated by SUMO2 at Lys-395 and Lys-433 during the hepatic acute phase response, leading to promote interaction with GPS2 and prevent N-Cor corepressor complex dissociation.

The protein localises to the nucleus. In terms of biological role, nuclear receptor that exhibits a ligand-dependent transcriptional activation activity. Binds preferentially to double-stranded oligonucleotide direct repeats having the consensus half-site sequence 5'-AGGTCA-3' and 4-nt spacing (DR-4). Regulates cholesterol uptake through MYLIP-dependent ubiquitination of LDLR, VLDLR and LRP8; DLDLR and LRP8. Interplays functionally with RORA for the regulation of genes involved in liver metabolism. Induces LPCAT3-dependent phospholipid remodeling in endoplasmic reticulum (ER) membranes of hepatocytes, driving SREBF1 processing and lipogenesis. Via LPCAT3, triggers the incorporation of arachidonate into phosphatidylcholines of ER membranes, increasing membrane dynamics and enabling triacylglycerols transfer to nascent very low-density lipoprotein (VLDL) particles. Via LPCAT3 also counteracts lipid-induced ER stress response and inflammation, likely by modulating SRC kinase membrane compartmentalization and limiting the synthesis of lipid inflammatory mediators. Plays an anti-inflammatory role during the hepatic acute phase response by acting as a corepressor: inhibits the hepatic acute phase response by preventing dissociation of the N-Cor corepressor complex. This chain is Oxysterols receptor LXR-beta (Nr1h2), found in Rattus norvegicus (Rat).